The chain runs to 93 residues: Probable Fe(2+)-trafficking protein (93 aa).

This sequence belongs to the Fe(2+)-trafficking protein family.

Functionally, could be a mediator in iron transactions between iron acquisition and iron-requiring processes, such as synthesis and/or repair of Fe-S clusters in biosynthetic enzymes. In Polaromonas naphthalenivorans (strain CJ2), this protein is Probable Fe(2+)-trafficking protein.